We begin with the raw amino-acid sequence, 983 residues long: UPF0182 protein KRH_08700 (983 aa).

7 consecutive transmembrane segments (helical) span residues 22–42 (GALL…VGFT), 67–87 (VIGL…LSLW), 116–136 (VVMV…VATQ), 172–192 (LLIG…LLMH), 213–233 (VHLG…FWLD), 261–281 (GILA…GFIG), and 288–308 (IGAA…PWAI). The tract at residues 893–959 (GAKTDTGAGV…DKAMKDGDWT (67 aa)) is disordered. Residues 947–959 (QDSDKAMKDGDWT) are compositionally biased toward basic and acidic residues.

This sequence belongs to the UPF0182 family.

It localises to the cell membrane. The chain is UPF0182 protein KRH_08700 from Kocuria rhizophila (strain ATCC 9341 / DSM 348 / NBRC 103217 / DC2201).